The following is a 115-amino-acid chain: Nascent polypeptide-associated complex protein (115 aa).

Residues 6–72 enclose the NAC-A/B domain; the sequence is PMNPKQLKKL…SEEEKAIINI (67 aa).

The protein belongs to the NAC-alpha family. As to quaternary structure, homodimer. Interacts with the ribosome. Binds ribosomal RNA.

In terms of biological role, contacts the emerging nascent chain on the ribosome. The protein is Nascent polypeptide-associated complex protein of Pyrococcus horikoshii (strain ATCC 700860 / DSM 12428 / JCM 9974 / NBRC 100139 / OT-3).